The chain runs to 258 residues: Glucosamine-6-phosphate deaminase (258 aa).

Asp-65 functions as the Proton acceptor; for enolization step in the catalytic mechanism. Catalysis depends on Asp-134, which acts as the For ring-opening step. The active-site Proton acceptor; for ring-opening step is the His-136. The active-site For ring-opening step is the Glu-141.

Belongs to the glucosamine/galactosamine-6-phosphate isomerase family. NagB subfamily.

It carries out the reaction alpha-D-glucosamine 6-phosphate + H2O = beta-D-fructose 6-phosphate + NH4(+). The protein operates within amino-sugar metabolism; N-acetylneuraminate degradation; D-fructose 6-phosphate from N-acetylneuraminate: step 5/5. In terms of biological role, catalyzes the reversible isomerization-deamination of glucosamine 6-phosphate (GlcN6P) to form fructose 6-phosphate (Fru6P) and ammonium ion. The polypeptide is Glucosamine-6-phosphate deaminase (Corynebacterium kroppenstedtii (strain DSM 44385 / JCM 11950 / CIP 105744 / CCUG 35717)).